Here is a 137-residue protein sequence, read N- to C-terminus: Large ribosomal subunit protein uL16 (137 aa).

Belongs to the universal ribosomal protein uL16 family. In terms of assembly, part of the 50S ribosomal subunit.

Binds 23S rRNA and is also seen to make contacts with the A and possibly P site tRNAs. This chain is Large ribosomal subunit protein uL16, found in Streptococcus thermophilus (strain CNRZ 1066).